The chain runs to 415 residues: Gamma-glutamyl phosphate reductase (415 aa).

It belongs to the gamma-glutamyl phosphate reductase family.

It localises to the cytoplasm. The catalysed reaction is L-glutamate 5-semialdehyde + phosphate + NADP(+) = L-glutamyl 5-phosphate + NADPH + H(+). The protein operates within amino-acid biosynthesis; L-proline biosynthesis; L-glutamate 5-semialdehyde from L-glutamate: step 2/2. Functionally, catalyzes the NADPH-dependent reduction of L-glutamate 5-phosphate into L-glutamate 5-semialdehyde and phosphate. The product spontaneously undergoes cyclization to form 1-pyrroline-5-carboxylate. In Salmonella dublin (strain CT_02021853), this protein is Gamma-glutamyl phosphate reductase.